The chain runs to 339 residues: Inositol 2-dehydrogenase 2 (339 aa).

It belongs to the Gfo/Idh/MocA family. Homotetramer.

It catalyses the reaction myo-inositol + NAD(+) = scyllo-inosose + NADH + H(+). Involved in the oxidation of myo-inositol (MI) to 2-keto-myo-inositol (2KMI or 2-inosose). The chain is Inositol 2-dehydrogenase 2 from Saccharopolyspora erythraea (strain ATCC 11635 / DSM 40517 / JCM 4748 / NBRC 13426 / NCIMB 8594 / NRRL 2338).